A 59-amino-acid chain; its full sequence is Small, acid-soluble spore protein C1 (59 aa).

Belongs to the alpha/beta-type SASP family. SASP are degraded in the first minutes of spore germination and provide amino acids for both new protein synthesis and metabolism.

SASP are bound to spore DNA. They are double-stranded DNA-binding proteins that cause DNA to change to an a-like conformation. They protect the DNA backbone from chemical and enzymatic cleavage and are thus involved in dormant spore's high resistance to UV light. The protein is Small, acid-soluble spore protein C1 (sspC1) of Clostridium perfringens (strain 13 / Type A).